Here is a 64-residue protein sequence, read N- to C-terminus: Conotoxin VnMLCL-05 (64 aa).

An N-terminal signal peptide occupies residues 1–19 (MLCLPVFIILLLLASPAAP). Positions 20-43 (NPLQTRIQSNLIRAGPEDANIKTD) are excised as a propeptide. Position 63 is a lysine amide (Lys63).

It belongs to the conotoxin T superfamily. As to expression, expressed by the venom duct.

The protein resides in the secreted. This is Conotoxin VnMLCL-05 from Conus ventricosus (Mediterranean cone).